The sequence spans 65 residues: Large ribosomal subunit protein bL35 (65 aa).

It belongs to the bacterial ribosomal protein bL35 family.

The protein is Large ribosomal subunit protein bL35 of Synechococcus sp. (strain CC9311).